We begin with the raw amino-acid sequence, 366 residues long: MWPLSHRHLCLAFLLVCVLSAISFFLHIHQDSIRHGLGLSVLCPDRRLVTPPVAIFCLPGTPMSPNTSSPCPQNSASLSGTWTIYPDGRFGNQMGQYATLLALAQLNGRRAFILPAMHAALAPVFRITLPVLAPEVDSRTPWRELRLHDWMSEEYADLGDPFLKLSGFPCSWTFFHHLREQIRSEFTLHDHLREEAQSVLRRLRLGRSGDRPRTFVGVHVRRGDYLQVMPQRWKGVVGNGAYLREAMDWFRARHEAPVFVVTSNGMDWCRENIDASKGDVMFAGDGQEASPWKDFALLTQCNHTIMTIGTFGFWAAYLAGGDTVYLANFTLPDSEFLKIFKPEAAFLPEWVGINADLSPLWTLAEP.

At 1 to 8 the chain is on the cytoplasmic side; that stretch reads MWPLSHRH. Residues 9 to 25 form a helical; Signal-anchor for type II membrane protein membrane-spanning segment; sequence LCLAFLLVCVLSAISFF. The Lumenal portion of the chain corresponds to 26-366; sequence LHIHQDSIRH…LSPLWTLAEP (341 aa). Asn-66, Asn-302, and Asn-328 each carry an N-linked (GlcNAc...) asparagine glycan.

The protein belongs to the glycosyltransferase 11 family.

The protein localises to the golgi apparatus. Its subcellular location is the golgi stack membrane. It catalyses the reaction a beta-D-galactosyl-(1-&gt;4)-N-acetyl-beta-D-glucosaminyl derivative + GDP-beta-L-fucose = an alpha-L-Fuc-(1-&gt;2)-beta-D-Gal-(1-&gt;4)-beta-D-GlcNAc derivative + GDP + H(+). The enzyme catalyses a ganglioside GA1 + GDP-beta-L-fucose = a ganglioside Fuc-GA1 + GDP + H(+). It carries out the reaction a beta-D-Gal-(1-&gt;3)-beta-D-GlcNAc-(1-&gt;3)-beta-D-Gal-(1-&gt;4)-beta-D-Glc-(1&lt;-&gt;1')-Cer(d18:1(4E)) + GDP-beta-L-fucose = alpha-L-fucosyl-(1-&gt;2)- beta-D-galactosyl-(1-&gt;3)-N-acetyl-beta-D-glucosaminyl-(1-&gt;3)-beta-D-galactosyl-(1-&gt;4)-beta-D-glucosyl-(1&lt;-&gt;1')-N-acylsphing-4-enine + GDP + H(+). The catalysed reaction is a neolactoside nLc4Cer(d18:1(4E)) + GDP-beta-L-fucose = a neolactoside IV(2)-alpha-Fuc-nLc4Cer(d18:1(4E)) + GDP + H(+). It catalyses the reaction a ganglioside GM1 + GDP-beta-L-fucose = a ganglioside Fuc-GM1 + GDP + H(+). The enzyme catalyses beta-D-galactosyl-(1-&gt;3)-N-acetyl-D-galactosamine + GDP-beta-L-fucose = alpha-L-fucosyl-(1-&gt;2)-beta-D-galactosyl-(1-&gt;3)-N-acetyl-D-galactosamine + GDP + H(+). Its pathway is protein modification; protein glycosylation. In terms of biological role, catalyzes the transfer of L-fucose, from a guanosine diphosphate-beta-L-fucose, to the terminal galactose residue of glycoconjugates through an alpha(1,2) linkage leading to H antigen synthesis that is an intermediate substrate in the synthesis of ABO blood group antigens. H antigen is essential for maturation of the glomerular layer of the main olfactory bulb, in cell migration and early cell-cell contacts during tumor associated angiogenesis. Preferentially fucosylates soluble lactose and to a lesser extent fucosylates glycolipids gangliosides GA1 and GM1a. The sequence is that of Galactoside alpha-(1,2)-fucosyltransferase 1 from Aotus nancymaae (Ma's night monkey).